A 418-amino-acid chain; its full sequence is Argininosuccinate synthase (418 aa).

Residues 14-22 and Ala-42 each bind ATP; that span reads AYSGGLDTS. The L-citrulline site is built by Tyr-94 and Ser-99. ATP is bound at residue Gly-124. Positions 126, 130, and 131 each coordinate L-aspartate. L-citrulline is bound at residue Asn-130. Residues Arg-134, Ser-183, Ser-192, Glu-273, and Tyr-285 each contribute to the L-citrulline site.

Belongs to the argininosuccinate synthase family. Type 1 subfamily. As to quaternary structure, homotetramer.

It is found in the cytoplasm. The enzyme catalyses L-citrulline + L-aspartate + ATP = 2-(N(omega)-L-arginino)succinate + AMP + diphosphate + H(+). It functions in the pathway amino-acid biosynthesis; L-arginine biosynthesis; L-arginine from L-ornithine and carbamoyl phosphate: step 2/3. The polypeptide is Argininosuccinate synthase (Colwellia psychrerythraea (strain 34H / ATCC BAA-681) (Vibrio psychroerythus)).